Consider the following 140-residue polypeptide: UPF0299 membrane protein CGSHiGG_01475 (140 aa).

Transmembrane regions (helical) follow at residues 1–21, 33–52, 60–80, and 92–112; these read MIQKLFLLVRSLVILSIMLYL, VPGSIWGLLLLFLGLTTRVI, GASLLIRFMAVLFVPVSVGII, and ILLVPNIVSTCVTLLVIGFLG.

Belongs to the UPF0299 family.

It localises to the cell inner membrane. The polypeptide is UPF0299 membrane protein CGSHiGG_01475 (Haemophilus influenzae (strain PittGG)).